The sequence spans 223 residues: MEELAHPYVPRDLNLPGYVPISMSMSSIVSIYLGSSLLVVSLVWLLFGRKKAKLDKLLMCWWTFTGLTHVILEGYFVFSPEFFKDNTSAYLAEVWKEYSKGDSRYVGRDSAVVSVEGITAVIVGPASLLAIYAIAKEKSYSYVLQLAISVCQLYGCLVYFITAILEGDNFATNSFYYYSYYIGANCWWVLIPSLISFRCWKKICAAAAIANNNVETKTKKKTR.

Transmembrane regions (helical) follow at residues 28 to 48, 58 to 78, 115 to 135, and 175 to 195; these read IVSIYLGSSLLVVSLVWLLFG, LMCWWTFTGLTHVILEGYFVF, VEGITAVIVGPASLLAIYAIA, and FYYYSYYIGANCWWVLIPSLI. The region spanning 54–196 is the EXPERA domain; that stretch reads LDKLLMCWWT…WWVLIPSLIS (143 aa).

Belongs to the EBP family.

The protein localises to the endoplasmic reticulum membrane. The enzyme catalyses lathosterol = 5alpha-cholest-8-en-3beta-ol. It participates in steroid biosynthesis; sterol biosynthesis. Its function is as follows. Catalyzes the conversion of Delta(8)-sterols to their corresponding Delta(7)-isomers. The chain is Probable 3-beta-hydroxysteroid-Delta(8),Delta(7)-isomerase from Arabidopsis thaliana (Mouse-ear cress).